Consider the following 2286-residue polypeptide: Unconventional myosin-IXAb (2286 aa).

The 99-residue stretch at 16 to 114 (SEFTLRVYPG…YRFLLREKNL (99 aa)) folds into the Ras-associating domain. In terms of domain architecture, Myosin motor spans 148 to 971 (AQFVADLCSL…LRQRLQDELH (824 aa)). A helical transmembrane segment spans residues 178–198 (IYTYVGSILIAVNPFKFLPIY). 242 to 249 (GESGSGKT) provides a ligand contact to ATP. Positions 853–875 (LNKLMETLGQSEPYFVKCIRSNA) are actin-binding. IQ domains follow at residues 976-996 (RRIV…HFCR), 1025-1054 (QQGA…AVLI), 1066-1095 (RNTA…AAVT), and 1089-1118 (QRRA…QQCR). The interval 976 to 1113 (RRIVCLQRSF…QSRQRCRILR (138 aa)) is neck or regulatory domain. The tract at residues 1114-2254 (EQQCREQSKH…PRANRSCPPK (1141 aa)) is tail. 4 disordered regions span residues 1118–1279 (REQS…QIRE), 1308–1341 (DVPL…FSVS), 1455–1588 (CEED…EPML), and 1732–1754 (DGTI…SDTV). Residues 1123 to 1133 (HPSTVTKSLHQ) are compositionally biased toward polar residues. Positions 1134-1149 (NTEEAEKLEEVWEKQT) are enriched in basic and acidic residues. A compositionally biased stretch (polar residues) spans 1263 to 1273 (PINSAPQTPNR). Positions 1455–1465 (CEEDEDDEYED) are enriched in acidic residues. Basic and acidic residues predominate over residues 1485-1501 (CVFHSDSEMSSQKEQKR). The segment covering 1529–1542 (RGKMRFWSKSKHGD) has biased composition (basic residues). Basic and acidic residues-rich tracts occupy residues 1550–1562 (RSAD…RRND) and 1572–1585 (GVSE…ENRE). Residues 1759–1808 (GHIFKSTQYSIPTYCEFCSSLIWMMDKACVCKLCRYACHKKCCLRMTTKC) form a Phorbol-ester/DAG-type zinc finger. The Rho-GAP domain maps to 1823 to 2011 (VELSRLTSDE…LIICEQMRKY (189 aa)). Positions 2032 to 2049 (LTHIRRSMGKSRARKSGH) are enriched in basic residues. Disordered stretches follow at residues 2032 to 2087 (LTHI…QQEE) and 2113 to 2286 (PRAS…EFMV). The stretch at 2080–2107 (QAAMQQEEKVLTQQIENLQKEKEELTYE) forms a coiled coil. Composition is skewed to low complexity over residues 2176 to 2192 (SLDS…SVSS) and 2200 to 2211 (SSSSGPLFSSSS). A compositionally biased stretch (polar residues) spans 2226-2238 (EQASLSARCASSS). Residues 2254-2270 (KPREPGDTGGRRREHEF) are compositionally biased toward basic and acidic residues.

It belongs to the TRAFAC class myosin-kinesin ATPase superfamily. Myosin family.

The protein resides in the membrane. Its subcellular location is the cytoplasm. The protein localises to the synapse. It localises to the cell projection. It is found in the growth cone. Functionally, myosins are actin-based motor molecules with ATPase activity. Unconventional myosins serve in intracellular movements. Regulates Rho by stimulating it's GTPase activity in neurons. Required for the regulation of neurite branching and motor neuron axon guidance. This Danio rerio (Zebrafish) protein is Unconventional myosin-IXAb (myo9ab).